The sequence spans 600 residues: NADH-quinone oxidoreductase subunit C/D (600 aa).

The NADH dehydrogenase I subunit C stretch occupies residues methionine 1–glutamate 190. The tract at residues glutamate 214–arginine 600 is NADH dehydrogenase I subunit D.

This sequence in the N-terminal section; belongs to the complex I 30 kDa subunit family. The protein in the C-terminal section; belongs to the complex I 49 kDa subunit family. NDH-1 is composed of 13 different subunits. Subunits NuoB, CD, E, F, and G constitute the peripheral sector of the complex.

It is found in the cell membrane. The enzyme catalyses a quinone + NADH + 5 H(+)(in) = a quinol + NAD(+) + 4 H(+)(out). NDH-1 shuttles electrons from NADH, via FMN and iron-sulfur (Fe-S) centers, to quinones in the respiratory chain. The immediate electron acceptor for the enzyme in this species is believed to be ubiquinone. Couples the redox reaction to proton translocation (for every two electrons transferred, four hydrogen ions are translocated across the cytoplasmic membrane), and thus conserves the redox energy in a proton gradient. In Buchnera aphidicola subsp. Acyrthosiphon pisum (strain 5A), this protein is NADH-quinone oxidoreductase subunit C/D.